Reading from the N-terminus, the 430-residue chain is Glucose-1-phosphate adenylyltransferase (430 aa).

Alpha-D-glucose 1-phosphate contacts are provided by residues G163, 178-179, and S210; that span reads EK.

This sequence belongs to the bacterial/plant glucose-1-phosphate adenylyltransferase family. As to quaternary structure, homotetramer.

It carries out the reaction alpha-D-glucose 1-phosphate + ATP + H(+) = ADP-alpha-D-glucose + diphosphate. It participates in glycan biosynthesis; glycogen biosynthesis. Functionally, involved in the biosynthesis of ADP-glucose, a building block required for the elongation reactions to produce glycogen. Catalyzes the reaction between ATP and alpha-D-glucose 1-phosphate (G1P) to produce pyrophosphate and ADP-Glc. In Synechococcus elongatus (strain ATCC 33912 / PCC 7942 / FACHB-805) (Anacystis nidulans R2), this protein is Glucose-1-phosphate adenylyltransferase.